A 185-amino-acid chain; its full sequence is MIEIRFHGRGGQGAVTAANILAEAAFLEGKYVQAFPFFGVERRGAPVTAFTRIDDKPIRIKTQIYEPDVVVVLDPSLLDTVDVTAGLKEGGMVIVNTEKTKEEVLEKLKKKPAKLALVDATTIALEILGLPITNTSILGAVAKATGIVKIESVEEAIKDTFSGELGKKNAKAAREAFEKTVVYEL.

In terms of assembly, heterotetramer of one alpha, one beta, one delta and one gamma chain.

The catalysed reaction is 2 oxidized [2Fe-2S]-[ferredoxin] + pyruvate + CoA = 2 reduced [2Fe-2S]-[ferredoxin] + acetyl-CoA + CO2 + H(+). The enzyme catalyses 3-methyl-2-oxobutanoate + 2 oxidized [2Fe-2S]-[ferredoxin] + CoA = 2-methylpropanoyl-CoA + 2 reduced [2Fe-2S]-[ferredoxin] + CO2 + H(+). The chain is Pyruvate/ketoisovalerate oxidoreductases common subunit gamma (porG) from Thermococcus litoralis (strain ATCC 51850 / DSM 5473 / JCM 8560 / NS-C).